The sequence spans 145 residues: D-aminoacyl-tRNA deacylase (145 aa).

Positions 137 to 138 (GP) match the Gly-cisPro motif, important for rejection of L-amino acids motif.

Belongs to the DTD family. Homodimer.

The protein localises to the cytoplasm. The enzyme catalyses glycyl-tRNA(Ala) + H2O = tRNA(Ala) + glycine + H(+). It carries out the reaction a D-aminoacyl-tRNA + H2O = a tRNA + a D-alpha-amino acid + H(+). Functionally, an aminoacyl-tRNA editing enzyme that deacylates mischarged D-aminoacyl-tRNAs. Also deacylates mischarged glycyl-tRNA(Ala), protecting cells against glycine mischarging by AlaRS. Acts via tRNA-based rather than protein-based catalysis; rejects L-amino acids rather than detecting D-amino acids in the active site. By recycling D-aminoacyl-tRNA to D-amino acids and free tRNA molecules, this enzyme counteracts the toxicity associated with the formation of D-aminoacyl-tRNA entities in vivo and helps enforce protein L-homochirality. This is D-aminoacyl-tRNA deacylase from Shewanella oneidensis (strain ATCC 700550 / JCM 31522 / CIP 106686 / LMG 19005 / NCIMB 14063 / MR-1).